A 318-amino-acid chain; its full sequence is uncharacterized protein (318 aa).

This is an uncharacterized protein from Orgyia pseudotsugata multicapsid polyhedrosis virus (OpMNPV).